Here is a 1900-residue protein sequence, read N- to C-terminus: Phosphatidylinositol 4-kinase STT4 (1900 aa).

The residue at position 459 (S459) is a Phosphoserine. Residues 1345-1530 (KIEGADSNEL…KPTLDRIRER (186 aa)) enclose the PIK helical domain. The segment at 1531–1648 (MVSSFSQSHR…EKWQAAIFKV (118 aa)) is pleckstrin homology (PH) domain conferring phosphoinositide binding specificity. The 268-residue stretch at 1617-1884 (FMATFKIKKD…LIRKSYESIF (268 aa)) folds into the PI3K/PI4K catalytic domain. Positions 1623–1629 (IKKDVKD) are G-loop. A catalytic loop region spans residues 1751–1759 (QFKDRHNGN). Positions 1770–1794 (HIDFGFIFDIVPGGIKFEAVPFKLT) are activation loop.

This sequence belongs to the PI3/PI4-kinase family. Type III PI4K subfamily.

It carries out the reaction a 1,2-diacyl-sn-glycero-3-phospho-(1D-myo-inositol) + ATP = a 1,2-diacyl-sn-glycero-3-phospho-(1D-myo-inositol 4-phosphate) + ADP + H(+). Functionally, acts on phosphatidylinositol (PI) in the first committed step in the production of the second messenger inositol 1,4,5,-trisphosphate. STT4 functions in PKC1 protein kinase pathway. The sequence is that of Phosphatidylinositol 4-kinase STT4 (STT4) from Saccharomyces cerevisiae (strain ATCC 204508 / S288c) (Baker's yeast).